Reading from the N-terminus, the 449-residue chain is Ribosomal protein uS12 methylthiotransferase RimO (449 aa).

The region spanning 15–125 (PRISFVSLGC…VLAAVHEAVP (111 aa)) is the MTTase N-terminal domain. Positions 24, 60, 89, 156, 160, and 163 each coordinate [4Fe-4S] cluster. Positions 142-379 (LTPRHYAYLK…MRTQQKVSAR (238 aa)) constitute a Radical SAM core domain. The TRAM domain occupies 382-448 (KRKVGTRQSV…PYDLSGTAVG (67 aa)).

Belongs to the methylthiotransferase family. RimO subfamily. The cofactor is [4Fe-4S] cluster.

The protein localises to the cytoplasm. It carries out the reaction L-aspartate(89)-[ribosomal protein uS12]-hydrogen + (sulfur carrier)-SH + AH2 + 2 S-adenosyl-L-methionine = 3-methylsulfanyl-L-aspartate(89)-[ribosomal protein uS12]-hydrogen + (sulfur carrier)-H + 5'-deoxyadenosine + L-methionine + A + S-adenosyl-L-homocysteine + 2 H(+). Functionally, catalyzes the methylthiolation of an aspartic acid residue of ribosomal protein uS12. The protein is Ribosomal protein uS12 methylthiotransferase RimO of Xanthobacter autotrophicus (strain ATCC BAA-1158 / Py2).